The following is a 163-amino-acid chain: 2-C-methyl-D-erythritol 2,4-cyclodiphosphate synthase (163 aa).

Residues Asp12 and His14 each coordinate a divalent metal cation. 4-CDP-2-C-methyl-D-erythritol 2-phosphate is bound by residues 12–14 (DVH) and 38–39 (HS). A divalent metal cation is bound at residue His46. Residues 60–62 (DIG), 65–69 (FPDTD), 136–139 (TTTE), Phe143, and Arg146 each bind 4-CDP-2-C-methyl-D-erythritol 2-phosphate.

The protein belongs to the IspF family. Homotrimer. It depends on a divalent metal cation as a cofactor.

The enzyme catalyses 4-CDP-2-C-methyl-D-erythritol 2-phosphate = 2-C-methyl-D-erythritol 2,4-cyclic diphosphate + CMP. It functions in the pathway isoprenoid biosynthesis; isopentenyl diphosphate biosynthesis via DXP pathway; isopentenyl diphosphate from 1-deoxy-D-xylulose 5-phosphate: step 4/6. Involved in the biosynthesis of isopentenyl diphosphate (IPP) and dimethylallyl diphosphate (DMAPP), two major building blocks of isoprenoid compounds. Catalyzes the conversion of 4-diphosphocytidyl-2-C-methyl-D-erythritol 2-phosphate (CDP-ME2P) to 2-C-methyl-D-erythritol 2,4-cyclodiphosphate (ME-CPP) with a corresponding release of cytidine 5-monophosphate (CMP). In Acinetobacter baylyi (strain ATCC 33305 / BD413 / ADP1), this protein is 2-C-methyl-D-erythritol 2,4-cyclodiphosphate synthase.